Here is a 578-residue protein sequence, read N- to C-terminus: DNA primase (578 aa).

The segment at Cys-40–Cys-64 adopts a CHC2-type zinc-finger fold. The Toprim domain occupies Lys-257–Pro-339. Residues Glu-263, Asp-307, and Asp-309 each contribute to the Mg(2+) site.

This sequence belongs to the DnaG primase family. As to quaternary structure, monomer. Interacts with DnaB. It depends on Zn(2+) as a cofactor. Mg(2+) is required as a cofactor.

It catalyses the reaction ssDNA + n NTP = ssDNA/pppN(pN)n-1 hybrid + (n-1) diphosphate.. Its function is as follows. RNA polymerase that catalyzes the synthesis of short RNA molecules used as primers for DNA polymerase during DNA replication. The polypeptide is DNA primase (Buchnera aphidicola subsp. Baizongia pistaciae (strain Bp)).